We begin with the raw amino-acid sequence, 647 residues long: Acetyl-coenzyme A synthetase (647 aa).

CoA contacts are provided by residues 190-193 (RGGK), Thr-310, and Asn-334. ATP-binding positions include 386 to 388 (GEP), 410 to 415 (DTWWQT), Asp-499, and Arg-514. Residue Ser-522 coordinates CoA. ATP is bound at residue Arg-525. Mg(2+)-binding residues include Val-536, His-538, and Val-541. Arg-583 lines the CoA pocket. Lys-608 carries the N6-acetyllysine modification.

It belongs to the ATP-dependent AMP-binding enzyme family. The cofactor is Mg(2+). Post-translationally, acetylated. Deacetylation by the SIR2-homolog deacetylase activates the enzyme.

The enzyme catalyses acetate + ATP + CoA = acetyl-CoA + AMP + diphosphate. Functionally, catalyzes the conversion of acetate into acetyl-CoA (AcCoA), an essential intermediate at the junction of anabolic and catabolic pathways. AcsA undergoes a two-step reaction. In the first half reaction, AcsA combines acetate with ATP to form acetyl-adenylate (AcAMP) intermediate. In the second half reaction, it can then transfer the acetyl group from AcAMP to the sulfhydryl group of CoA, forming the product AcCoA. The sequence is that of Acetyl-coenzyme A synthetase from Xanthomonas oryzae pv. oryzae (strain MAFF 311018).